The following is a 941-amino-acid chain: Cilia- and flagella-associated protein 69 (941 aa).

Positions methionine 1 to glutamate 14 are enriched in low complexity. The disordered stretch occupies residues methionine 1–glutamine 26. Residues glycine 16–glutamine 26 show a composition bias toward polar residues.

Highly expressed in the testis, specifically in sperm (at protein level). Expressed in the brain, kidney, liver, lung, and intestine.

It localises to the cell projection. It is found in the cilium. The protein resides in the flagellum. Functionally, cilium- and flagellum-associated protein. In the olfactory epithelium, regulates the speed of activation and termination of the odor response and thus contributes to the robustness of olfactory transduction pathways. Required for sperm flagellum assembly and stability. This chain is Cilia- and flagella-associated protein 69, found in Homo sapiens (Human).